The chain runs to 207 residues: Urease accessory protein UreG (207 aa).

Residue 12–19 coordinates GTP; it reads GPVGAGKT.

Belongs to the SIMIBI class G3E GTPase family. UreG subfamily. Homodimer. UreD, UreF and UreG form a complex that acts as a GTP-hydrolysis-dependent molecular chaperone, activating the urease apoprotein by helping to assemble the nickel containing metallocenter of UreC. The UreE protein probably delivers the nickel.

It is found in the cytoplasm. Functionally, facilitates the functional incorporation of the urease nickel metallocenter. This process requires GTP hydrolysis, probably effectuated by UreG. This is Urease accessory protein UreG from Cereibacter sphaeroides (strain KD131 / KCTC 12085) (Rhodobacter sphaeroides).